The sequence spans 294 residues: UDP-3-O-acyl-N-acetylglucosamine deacetylase (294 aa).

Zn(2+)-binding residues include H75, H232, and D236. H259 (proton donor) is an active-site residue.

This sequence belongs to the LpxC family. Zn(2+) serves as cofactor.

It carries out the reaction a UDP-3-O-[(3R)-3-hydroxyacyl]-N-acetyl-alpha-D-glucosamine + H2O = a UDP-3-O-[(3R)-3-hydroxyacyl]-alpha-D-glucosamine + acetate. It participates in glycolipid biosynthesis; lipid IV(A) biosynthesis; lipid IV(A) from (3R)-3-hydroxytetradecanoyl-[acyl-carrier-protein] and UDP-N-acetyl-alpha-D-glucosamine: step 2/6. Functionally, catalyzes the hydrolysis of UDP-3-O-myristoyl-N-acetylglucosamine to form UDP-3-O-myristoylglucosamine and acetate, the committed step in lipid A biosynthesis. In Campylobacter hominis (strain ATCC BAA-381 / DSM 21671 / CCUG 45161 / LMG 19568 / NCTC 13146 / CH001A), this protein is UDP-3-O-acyl-N-acetylglucosamine deacetylase.